The following is a 140-amino-acid chain: Small ribosomal subunit protein uS12 (140 aa).

At Asp-102 the chain carries 3-methylthioaspartic acid. The disordered stretch occupies residues 121–140; it reads ANRQQSRSKYGAKKPKAAKK. Positions 130 to 140 are enriched in basic residues; the sequence is YGAKKPKAAKK.

The protein belongs to the universal ribosomal protein uS12 family. Part of the 30S ribosomal subunit. Contacts proteins S8 and S17. May interact with IF1 in the 30S initiation complex.

In terms of biological role, with S4 and S5 plays an important role in translational accuracy. Interacts with and stabilizes bases of the 16S rRNA that are involved in tRNA selection in the A site and with the mRNA backbone. Located at the interface of the 30S and 50S subunits, it traverses the body of the 30S subunit contacting proteins on the other side and probably holding the rRNA structure together. The combined cluster of proteins S8, S12 and S17 appears to hold together the shoulder and platform of the 30S subunit. The protein is Small ribosomal subunit protein uS12 of Alkaliphilus oremlandii (strain OhILAs) (Clostridium oremlandii (strain OhILAs)).